A 332-amino-acid chain; its full sequence is MSGQHQITEQPSGNPLSRTSTLIQEKPLTPTSSHAGTQKQPEAPRQPTFLIQLQNIRHAIRKPMAEFFGVALLIIFGAGSACQVVLSTNPDVASSARGSFLSINFGWAIGIAMGVWVSGGISGGHINPAITIAMATYRGFPWCKVPSYILAQVLGGVVGAALVYANYIHAIDVFEGGHHIRTEATASLFATYALPYMTQASCFFSEFLATAVLSMMVFALTDKRNHSPTNGLLPFALFILFVGLGASLGMETAYALNPARDFGPRLFLAMAGYGKALFNYRSQYWLWAPIIAPVLGAQAGGLLYDTFLNDGDNSPIKWRCASSQEQQLAEVV.

Positions M1–Q40 are enriched in polar residues. Positions M1–Q46 are disordered. Residues M1 to E66 are Cytoplasmic-facing. The helical transmembrane segment at F67–S87 threads the bilayer. Residues T88–F100 are Extracellular-facing. The helical transmembrane segment at L101–I121 threads the bilayer. Residues S122–K144 are Cytoplasmic-facing. Residues N127–A129 carry the NPA 1 motif. The chain crosses the membrane as a helical span at residues V145–A165. Topologically, residues N166–Q199 are extracellular. Residues A200–L220 form a helical membrane-spanning segment. The Cytoplasmic segment spans residues T221–N230. A helical membrane pass occupies residues G231 to E251. Over T252–Q283 the chain is Extracellular. Residues N257–A259 carry the NPA 2 motif. Residues Y284 to Y304 traverse the membrane as a helical segment. The Cytoplasmic segment spans residues D305 to V332.

Belongs to the MIP/aquaporin (TC 1.A.8) family.

It is found in the membrane. The enzyme catalyses H2O(in) = H2O(out). In terms of biological role, water channel required to facilitate the transport of water across membranes. Does not mediate the transport carbon dioxide across the membrane. The chain is Aquaporin-7-2 from Laccaria bicolor (Bicoloured deceiver).